The chain runs to 504 residues: Cytochrome P450 monooxygenase iccC (504 aa).

Residues 7 to 26 (LPWILLYTGFLAIFLSRLFS) form a helical membrane-spanning segment. N134, N312, N365, and N374 each carry an N-linked (GlcNAc...) asparagine glycan. C452 provides a ligand contact to heme. N-linked (GlcNAc...) asparagine glycosylation is present at N494.

Belongs to the cytochrome P450 family. Heme is required as a cofactor.

It is found in the membrane. The catalysed reaction is (3E,5S)-3-[(2E,4E,8S,10E,12Z)-1-hydroxy-4,8-dimethyltetradeca-2,4,10,12-tetraen-1-ylidene]-5-[(4-hydroxyphenyl)methyl]pyrrolidine-2,4-dione + reduced [NADPH--hemoprotein reductase] + O2 = 3-[(2E,4E,8S,10E,12Z)-4,8-dimethyltetradeca-2,4,10,12-tetraenoyl]-4-hydroxy-5-(4-hydroxyphenyl)-1,2-dihydropyridin-2-one + oxidized [NADPH--hemoprotein reductase] + 2 H2O. Its pathway is mycotoxin biosynthesis. In terms of biological role, cytochrome P450 monooxygenase; part of the gene cluster that mediates the biosynthesis of ilicicolin H, a 4-hydroxy-2-pyridonealkaloid that has potent and broad antifungal activities by inhibiting the mitochondrial respiration chain. IccC catalyzes the ring expansion of the tetramate intermediate to the acyclic 2-pyridone intermediate that contains the trans bis-diene chain. The biosynthesis of ilicicolin H starts with formation of the tetramic acid by the hybrid PKS-NRPS synthetase iccA with the partnering trans-enoyl reductase iccB since iccA lacks a designated enoylreductase (ER) domain. The cytochrome P450 monooxygenase iccC then catalyzes the ring expansion of the tetramate to the acyclic 2-pyridone. The pericyclase iccD further converts the acyclic 2-pyridone into 8-epi-ilicicolin H. Finally, the epimerase iccE converts 8-epi-ilicicolin H into ilicicolin H via epimerization. IccA to iccE are sufficient for ilicicolin H biosynthesis and the roles of the remaining enzymes, iccF, iccG and iccH within the pathway have still to be determined. The sequence is that of Cytochrome P450 monooxygenase iccC from Talaromyces variabilis (Penicillium variabile).